The following is a 613-amino-acid chain: Zinc metalloproteinase-disintegrin-like MTP4 (613 aa).

The signal sequence occupies residues 1-20; that stretch reads MIEVLLVTICFTVFPYQGSS. A propeptide spanning residues 21–191 is cleaved from the precursor; the sequence is IILESGNVND…DEPIEKISQL (171 aa). Positions 205 to 401 constitute a Peptidase M12B domain; the sequence is KYIELYVVVD…VRPQCILNKP (197 aa). Position 208 (glutamate 208) interacts with Ca(2+). N-linked (GlcNAc...) asparagine glycosylation occurs at asparagine 282. A Ca(2+)-binding site is contributed by aspartate 292. Disulfide bonds link cysteine 316–cysteine 396, cysteine 356–cysteine 380, and cysteine 358–cysteine 363. Zn(2+)-binding residues include histidine 341, histidine 345, and histidine 351. The Ca(2+) site is built by cysteine 396, asparagine 399, asparagine 414, phenylalanine 416, glutamate 418, glutamate 421, and aspartate 424. In terms of domain architecture, Disintegrin spans 409 to 495; it reads PPVCGNYFVE…KCPTDSFQRN (87 aa). 15 disulfides stabilise this stretch: cysteine 412–cysteine 441, cysteine 423–cysteine 436, cysteine 425–cysteine 431, cysteine 435–cysteine 458, cysteine 449–cysteine 455, cysteine 454–cysteine 480, cysteine 467–cysteine 487, cysteine 474–cysteine 506, cysteine 499–cysteine 511, cysteine 518–cysteine 568, cysteine 533–cysteine 575, cysteine 543–cysteine 577, cysteine 546–cysteine 556, cysteine 563–cysteine 601, and cysteine 595–cysteine 606. N-linked (GlcNAc...) asparagine glycosylation is present at asparagine 437. A D/ECD-tripeptide motif is present at residues 473 to 475; the sequence is DCD. Residues aspartate 475, leucine 476, glutamate 478, and aspartate 490 each coordinate Ca(2+). The interval 561 to 574 is hypervariable region that may play important roles toward cell migration; that stretch reads KMCGKLLCEKGNAT. An N-linked (GlcNAc...) asparagine glycan is attached at asparagine 572.

Belongs to the venom metalloproteinase (M12B) family. P-III subfamily. In terms of assembly, monomer. It depends on Zn(2+) as a cofactor. In terms of tissue distribution, expressed by the venom gland.

The protein localises to the secreted. In terms of biological role, snake venom zinc metalloproteinase that may impair hemostasis in the prey. This chain is Zinc metalloproteinase-disintegrin-like MTP4, found in Drysdalia coronoides (White-lipped snake).